The chain runs to 1163 residues: DNA-directed RNA polymerase subunit beta 2 (1163 aa).

It belongs to the RNA polymerase beta chain family. As to quaternary structure, the RNAP catalytic core consists of 2 alpha, 1 beta, 1 beta' and 1 omega subunit. When a sigma factor is associated with the core the holoenzyme is formed, which can initiate transcription.

It catalyses the reaction RNA(n) + a ribonucleoside 5'-triphosphate = RNA(n+1) + diphosphate. In terms of biological role, DNA-dependent RNA polymerase catalyzes the transcription of DNA into RNA using the four ribonucleoside triphosphates as substrates. The polypeptide is DNA-directed RNA polymerase subunit beta 2 (Nocardia farcinica (strain IFM 10152)).